The following is a 300-amino-acid chain: uncharacterized protein (300 aa).

Residues 1–7 are Periplasmic-facing; it reads MGSTRKG. Residues 8–28 traverse the membrane as a helical segment; that stretch reads MLNVLIAAVLWGSSGVCAQYI. The region spanning 16-145 is the EamA 1 domain; it reads VLWGSSGVCA…SLIGTFLLVT (130 aa). At 29–45 the chain is on the cytoplasmic side; sequence MEQSRMSSQFLTMIRLL. A helical transmembrane segment spans residues 46 to 66; it reads FAGLILVTFSFMHGDKIFSIL. The Periplasmic segment spans residues 67–71; it reads KNRKD. The helical transmembrane segment at 72–92 threads the bilayer; sequence ALSLLIFSVVGALTVQLTFLL. Over 93 to 99 the chain is Cytoplasmic; it reads TIEKSNA. The helical transmembrane segment at 100 to 120 threads the bilayer; the sequence is ATATVLQFLSPTIIVAWFALA. At 121 to 124 the chain is on the periplasmic side; sequence RRTR. The helical transmembrane segment at 125–145 threads the bilayer; sequence PGILVLTAILTSLIGTFLLVT. The Cytoplasmic portion of the chain corresponds to 146-151; that stretch reads HGNPTS. A helical transmembrane segment spans residues 152 to 172; the sequence is LSISSAALFWGIASAFAAAFY. Residues 167–291 enclose the EamA 2 domain; sequence FAAAFYTTWP…ILSSVILISL (125 aa). At 173-184 the chain is on the periplasmic side; it reads TTWPSRLIAQYG. The chain crosses the membrane as a helical span at residues 185–205; it reads TLPVVGWSMSFGGLILLPFYA. Over 206 to 216 the chain is Cytoplasmic; that stretch reads KEGTHFAVSGS. Residues 217–237 form a helical membrane-spanning segment; sequence LILAFFYLVVIGTSLTFSLYL. At 238–263 the chain is on the periplasmic side; sequence KGAQLIGGPKASILSCAEPLSSALLS. The helical transmembrane segment at 264 to 284 threads the bilayer; the sequence is LLLLGISFTLPDWLGTLLILS. The Cytoplasmic portion of the chain corresponds to 285–300; sequence SVILISLDSRRRARAA.

Belongs to the EamA transporter family.

The protein resides in the cell inner membrane. This is an uncharacterized protein from Salmonella typhimurium (strain LT2 / SGSC1412 / ATCC 700720).